The chain runs to 284 residues: L-ribulose-5-phosphate 3-epimerase UlaE (284 aa).

It belongs to the L-ribulose-5-phosphate 3-epimerase family.

The enzyme catalyses L-ribulose 5-phosphate = L-xylulose 5-phosphate. Its pathway is cofactor degradation; L-ascorbate degradation; D-xylulose 5-phosphate from L-ascorbate: step 3/4. Catalyzes the isomerization of L-xylulose-5-phosphate to L-ribulose-5-phosphate. Is involved in the anaerobic L-ascorbate utilization. The sequence is that of L-ribulose-5-phosphate 3-epimerase UlaE from Escherichia coli (strain SMS-3-5 / SECEC).